A 601-amino-acid chain; its full sequence is Uptake hydrogenase large subunit (601 aa).

Positions 74, 77, 580, and 583 each coordinate Ni(2+).

The protein belongs to the [NiFe]/[NiFeSe] hydrogenase large subunit family. In terms of assembly, heterodimer of a large and a small subunit. Ni(2+) is required as a cofactor.

It localises to the cell membrane. The catalysed reaction is H2 + A = AH2. In terms of biological role, this enzyme recycles the H(2) produced by nitrogenase to increase the production of ATP and to protect nitrogenase against inhibition or damage by O(2) under carbon- or phosphate-limited conditions. The polypeptide is Uptake hydrogenase large subunit (hupL) (Azotobacter chroococcum mcd 1).